The following is a 183-amino-acid chain: Peptidyl-prolyl cis-trans isomerase 11 (183 aa).

The PPIase cyclophilin-type domain occupies 20 to 182 (FLEVTAGGAP…LPIVVVQCGQ (163 aa)).

This sequence belongs to the cyclophilin-type PPIase family. PPIase H subfamily.

It carries out the reaction [protein]-peptidylproline (omega=180) = [protein]-peptidylproline (omega=0). In terms of biological role, PPIases accelerate the folding of proteins. It catalyzes the cis-trans isomerization of proline imidic peptide bonds in oligopeptides. The sequence is that of Peptidyl-prolyl cis-trans isomerase 11 (cyn-11) from Caenorhabditis elegans.